The primary structure comprises 338 residues: Cytochrome P450 monooxygenase easK (338 aa).

Residues 1–16 (MLLLTFTLPVVTLLLA) form the signal peptide. Asparagine 240 and asparagine 327 each carry an N-linked (GlcNAc...) asparagine glycan.

It belongs to the cytochrome P450 family. Heme is required as a cofactor.

It functions in the pathway alkaloid biosynthesis; ergot alkaloid biosynthesis. In terms of biological role, cytochrome P450 monooxygenase; part of the gene cluster that mediates the biosynthesis of fumiclavanine C, a fungal ergot alkaloid. DmaW catalyzes the first step of ergot alkaloid biosynthesis by condensing dimethylallyl diphosphate (DMAP) and tryptophan to form 4-dimethylallyl-L-tryptophan. The second step is catalyzed by the methyltransferase easF that methylates 4-dimethylallyl-L-tryptophan in the presence of S-adenosyl-L-methionine, resulting in the formation of 4-dimethylallyl-L-abrine. The catalase easC and the FAD-dependent oxidoreductase easE then transform 4-dimethylallyl-L-abrine to chanoclavine-I which is further oxidized by EasD in the presence of NAD(+), resulting in the formation of chanoclavine-I aldehyde. EasA reduces chanoclavine-I aldehyde to dihydrochanoclavine-I aldehyde that spontaneously dehydrates to form 6,8-dimethyl-6,7-didehydroergoline. EasG then catalyzes the reduction of 6,8-dimethyl-6,7-didehydroergoline to form festuclavine. Hydrolysis of festuclavine by easM then leads to the formation of fumigaclavine B which is in turn acetylated by easN to fumigaclavine A. Finally, easL catalyzes the conversion of fumigaclavine A into fumigaclavine C by attaching a dimethylallyl moiety to C-2 of the indole nucleus. The role of the cytochrome P450 monooxygenase easK within the cluster has not been identified yet. This chain is Cytochrome P450 monooxygenase easK, found in Aspergillus fumigatus (strain ATCC MYA-4609 / CBS 101355 / FGSC A1100 / Af293) (Neosartorya fumigata).